A 369-amino-acid polypeptide reads, in one-letter code: CCA-adding enzyme (369 aa).

The ATP site is built by Gly8 and Arg11. 2 residues coordinate CTP: Gly8 and Arg11. Residues Asp21 and Asp23 each coordinate Mg(2+). The ATP site is built by Arg91, Arg137, and Arg140. Residues Arg91, Arg137, and Arg140 each contribute to the CTP site.

It belongs to the tRNA nucleotidyltransferase/poly(A) polymerase family. Bacterial CCA-adding enzyme type 2 subfamily. The cofactor is Mg(2+).

The enzyme catalyses a tRNA precursor + 2 CTP + ATP = a tRNA with a 3' CCA end + 3 diphosphate. It catalyses the reaction a tRNA with a 3' CCA end + 2 CTP + ATP = a tRNA with a 3' CCACCA end + 3 diphosphate. Functionally, catalyzes the addition and repair of the essential 3'-terminal CCA sequence in tRNAs without using a nucleic acid template. Adds these three nucleotides in the order of C, C, and A to the tRNA nucleotide-73, using CTP and ATP as substrates and producing inorganic pyrophosphate. tRNA 3'-terminal CCA addition is required both for tRNA processing and repair. Also involved in tRNA surveillance by mediating tandem CCA addition to generate a CCACCA at the 3' terminus of unstable tRNAs. While stable tRNAs receive only 3'-terminal CCA, unstable tRNAs are marked with CCACCA and rapidly degraded. This chain is CCA-adding enzyme, found in Francisella tularensis subsp. novicida (strain U112).